Consider the following 545-residue polypeptide: RNA-directed RNA polymerase beta chain (545 aa).

Residues 243-373 (RLAQQGSVDG…PNLRKTFVSG (131 aa)) enclose the RdRp catalytic domain.

Part of the viral RNA-dependent RNA polymerase complex, the other subunits are probably the host ribosomal protein S1, EF-Tu and EF-Ts.

The enzyme catalyses RNA(n) + a ribonucleoside 5'-triphosphate = RNA(n+1) + diphosphate. Functionally, this is the catalytic subunit of the viral RNA-dependent RNA polymerase complex. This complex is involved in viral RNA replication that produces (+)-stranded genomes via a complementary, (-)-stranded intermediate. The polypeptide is RNA-directed RNA polymerase beta chain (Escherichia coli (Bacteriophage MS2)).